A 266-amino-acid polypeptide reads, in one-letter code: Gasdermin bGSDM (266 aa).

4 consecutive transmembrane segments (beta stranded) span residues 67-83, 95-113, 162-179, and 187-203; these read LQQNSTVSFDGKAGVDI, KLRGNINADHINSLQISYQ, SFSVSAQNKNGQNIDLEA, and ADVNVGRSKKDEVLMEY.

The protein belongs to the bacterial gasdermin family. In terms of assembly, monomer. Forms large, homooligomeric ring-shaped pores when inserted in membranes.

Its subcellular location is the cytoplasm. The protein resides in the cell inner membrane. Its activity is regulated as follows. The full-length protein before cleavage is inactive: intramolecular interactions between the N-terminal domain and the C-terminal region mediate autoinhibition. The pyroptosis-like-inducing activity is carried by the released N-terminal domain (Gasdermin bGSDM, N-terminus). In terms of biological role, precursor of a pore-forming protein involved in defense against bacteriophages. Expression of bGSDM and the neighboring protease gene (Gilli_2517) is not toxic in E.coli. Cleavage of this precursor by its dedicated protease releases the active moiety (gasdermin bGSDM, N-terminus) which inserts into membranes, forming pores and triggering cell death. Its function is as follows. Pore-forming protein that causes membrane permeabilization via a pyroptosis-like activity. Makes ring-like pores when released. In Gillisia limnaea (strain DSM 15749 / LMG 21470 / R-8282), this protein is Gasdermin bGSDM.